A 74-amino-acid polypeptide reads, in one-letter code: Kappa-scoloptoxin(07)-Ssm2d (74 aa).

The first 19 residues, 1-19 (MLVFYALLFVTVFSNTVMG), serve as a signal peptide directing secretion. The propeptide occupies 20 to 41 (ATIDKPIPKPILREAIEEIEVN).

Belongs to the scoloptoxin-07 family. Post-translationally, contains 3 disulfide bonds. Expressed by the venom gland.

The protein resides in the secreted. Its function is as follows. Inhibits voltage-gated potassium channels. This Scolopendra mutilans (Chinese red-headed centipede) protein is Kappa-scoloptoxin(07)-Ssm2d.